Reading from the N-terminus, the 319-residue chain is Acetyl-coenzyme A carboxylase carboxyl transferase subunit alpha (319 aa).

The 254-residue stretch at 43 to 296 (LRDKSIELTR…KKQLLFDLSE (254 aa)) folds into the CoA carboxyltransferase C-terminal domain.

This sequence belongs to the AccA family. Acetyl-CoA carboxylase is a heterohexamer composed of biotin carboxyl carrier protein (AccB), biotin carboxylase (AccC) and two subunits each of ACCase subunit alpha (AccA) and ACCase subunit beta (AccD).

It localises to the cytoplasm. It carries out the reaction N(6)-carboxybiotinyl-L-lysyl-[protein] + acetyl-CoA = N(6)-biotinyl-L-lysyl-[protein] + malonyl-CoA. Its pathway is lipid metabolism; malonyl-CoA biosynthesis; malonyl-CoA from acetyl-CoA: step 1/1. Functionally, component of the acetyl coenzyme A carboxylase (ACC) complex. First, biotin carboxylase catalyzes the carboxylation of biotin on its carrier protein (BCCP) and then the CO(2) group is transferred by the carboxyltransferase to acetyl-CoA to form malonyl-CoA. The polypeptide is Acetyl-coenzyme A carboxylase carboxyl transferase subunit alpha (Baumannia cicadellinicola subsp. Homalodisca coagulata).